Reading from the N-terminus, the 405-residue chain is Sialic acid transporter NanX (405 aa).

Topologically, residues 1–20 (MATAWYKQVNPPQRKALFSA) are cytoplasmic. Residues 21 to 41 (WLGYVFDGFDFMMIFYILHII) form a helical membrane-spanning segment. Topologically, residues 42–53 (KADLGITDIQAT) are periplasmic. The chain crosses the membrane as a helical span at residues 54–74 (LIGTVAFIARPIGGGFFGAMA). At 75–80 (DKYGRK) the chain is on the cytoplasmic side. Residues 81–101 (PMMMWAIFIYSVGTGLSGIAT) form a helical membrane-spanning segment. A topological domain (periplasmic) is located at residue N102. The helical transmembrane segment at 103–123 (LYMLAVCRFIVGLGMSGEYAC) threads the bilayer. Residues 124–139 (ASTYAVESWPKNLQSK) lie on the Cytoplasmic side of the membrane. Residues 140 to 160 (ASAFLVSGFSVGNIIAAQIIP) form a helical membrane-spanning segment. The Periplasmic segment spans residues 161 to 164 (QFAE). A helical membrane pass occupies residues 165–185 (VYGWRNSFFIGLLPVLLVLWI). Residues 186–214 (RKSAPESQEWIEDKYKDKSTFLSVFRKPH) are Cytoplasmic-facing. The helical transmembrane segment at 215–235 (LSISMIVFLVCFCLFGANWPI) threads the bilayer. Topologically, residues 236-250 (NGLLPSYLADNGVNT) are periplasmic. The helical transmembrane segment at 251–271 (VVISTLMTIAGLGTLTGTIFF) threads the bilayer. Over 272 to 282 (GFVGDKIGVKK) the chain is Cytoplasmic. Residues 283–303 (AFVVGLITSFIFLCPLFFISV) traverse the membrane as a helical segment. Residues 304–307 (KNSS) are Periplasmic-facing. The helical transmembrane segment at 308–328 (LIGLCLFGLMFTNLGIAGLVP) threads the bilayer. Topologically, residues 329 to 344 (KFIYDYFPTKLRGLGT) are cytoplasmic. Residues 345–365 (GLIYNLGATGGMAAPVLATYI) form a helical membrane-spanning segment. At 366-371 (SGYYGL) the chain is on the periplasmic side. Residues 372–392 (GVSLFIVTVAFSALLILLVGF) traverse the membrane as a helical segment. Residues 393-405 (DIPGKIYKLSVAK) lie on the Cytoplasmic side of the membrane.

This sequence belongs to the major facilitator superfamily. Sugar transporter (TC 2.A.1.1) family.

Its subcellular location is the cell inner membrane. Probably transports across the inner membrane the two dehydrated forms of N-acetylneuraminate (Neu5Ac), 2,7-anhydro-N-acetylneuraminate (2,7-AN) and 2-deoxy-2,3-didehydro-N-acetylneuraminate (2,3-EN). This Escherichia coli (strain K12) protein is Sialic acid transporter NanX.